Consider the following 293-residue polypeptide: Elongation factor Ts (293 aa).

Positions 81-84 are involved in Mg(2+) ion dislocation from EF-Tu; the sequence is TDFV.

Belongs to the EF-Ts family.

It localises to the cytoplasm. Associates with the EF-Tu.GDP complex and induces the exchange of GDP to GTP. It remains bound to the aminoacyl-tRNA.EF-Tu.GTP complex up to the GTP hydrolysis stage on the ribosome. The polypeptide is Elongation factor Ts (Teredinibacter turnerae (strain ATCC 39867 / T7901)).